A 249-amino-acid chain; its full sequence is Type I iodothyronine deiodinase (249 aa).

Residues 1-12 (MELPLPGLWLKR) are Extracellular-facing. A helical; Signal-anchor for type III membrane protein membrane pass occupies residues 13-33 (LWVLFQVALHVAMGKVLMTLF). Residues 34-249 (PGRVKQDILA…VRAVLEKLHS (216 aa)) are Cytoplasmic-facing. The active site involves Sec-126. Sec-126 is a non-standard amino acid (selenocysteine).

Belongs to the iodothyronine deiodinase family. As to quaternary structure, predominantly monomer. Can form homodimers but homodimerization is not essential for enzyme activity.

It localises to the cell membrane. Its subcellular location is the endoplasmic reticulum membrane. The protein resides in the basolateral cell membrane. It catalyses the reaction 3,3',5-triiodo-L-thyronine + iodide + A + H(+) = L-thyroxine + AH2. It carries out the reaction 3,3',5'-triiodo-L-thyronine + iodide + A + H(+) = L-thyroxine + AH2. The catalysed reaction is 3,3'-diiodo-L-thyronine + iodide + A + H(+) = 3,3',5'-triiodo-L-thyronine + AH2. The enzyme catalyses 3,3'-diiodo-L-thyronine + iodide + A + H(+) = 3,3',5-triiodo-L-thyronine + AH2. It catalyses the reaction 3'-iodo-L-thyronine + iodide + A + H(+) = 3',5'-diiodo-L-thyronine + AH2. It carries out the reaction 3-iodo-L-thyronine + iodide + A + H(+) = 3,5-diiodo-L-thyronine + AH2. The catalysed reaction is 3-iodo-L-thyronine + iodide + A + H(+) = 3,3'-diiodo-L-thyronine + AH2. The enzyme catalyses 3,3'-diiodothyronamine + iodide + A + H(+) = 3,3',5'-triiodothyronamine + AH2. It catalyses the reaction 3'-iodothyronamine + iodide + A + H(+) = 3',5'-diiodothyronamine + AH2. It carries out the reaction 3-iodothyronamine + iodide + A + H(+) = 3,3'-diiodothyronamine + AH2. The catalysed reaction is 3,3'-diiodothyronamine + iodide + A + H(+) = 3,3',5-triiodothyronamine + AH2. The enzyme catalyses 3-iodothyronamine + iodide + A + H(+) = 3,5-diiodothyronamine + AH2. It catalyses the reaction 3,3'-diiodo-L-thyronine sulfate + iodide + A + H(+) = 3,3',5'-triiodo-L-thyronine sulfate + AH2. It carries out the reaction 3,3',5'-triiodo-L-thyronine sulfate + iodide + A + H(+) = L-thyroxine sulfate + AH2. The catalysed reaction is 3,3'-diiodo-L-thyronine sulfate + iodide + A + H(+) = 3,3',5-triiodo-L-thyronine sulfate + AH2. In terms of biological role, plays a crucial role in the metabolism of thyroid hormones (TH) and has specific roles in TH activation and inactivation by deiodination. Catalyzes the deiodination of L-thyroxine (T4) to 3,5,3'-triiodothyronine (T3) and 3,3',5'-triiodothyronine (rT3) to 3,3'-diiodothyronine (3,3'-T2) via outer-ring deiodination (ORD). Catalyzes the deiodination of T4 to rT3, T3 to 3,3'-T2, 3,5-diiodothyronine (3,5-T2) to 3-monoiodothyronine (3-T1) and 3,3'-T2 to 3-T1 via inner-ring deiodination (IRD). Catalyzes the deiodination of 3',5'-diiodothyronine (3',5'-T2) to 3'-monoiodothyronine (3'-T1) via ORD. Catalyzes the phenolic ring deiodinations of 3,3',5'-triiodothyronamine, 3',5'-diiodothyronamine and 3,3'-diiodothyronamine as well as tyrosyl ring deiodinations of 3,5,3'-triiodothyronamine and 3,5-diiodothyronamine. Catalyzes the deiodination of L-thyroxine sulfate and 3,3',5-triiodo-L-thyronine sulfate via IRD and of 3,3',5'-triiodo-L-thyronine sulfate via ORD. The chain is Type I iodothyronine deiodinase (DIO1) from Sus scrofa (Pig).